The primary structure comprises 229 residues: 5'-methylthioadenosine/S-adenosylhomocysteine nucleosidase (229 aa).

The active-site Proton acceptor is the E12. Residues G78, I152, and 173 to 174 (ME) contribute to the substrate site. Catalysis depends on D197, which acts as the Proton donor.

The protein belongs to the PNP/UDP phosphorylase family. MtnN subfamily.

It carries out the reaction S-adenosyl-L-homocysteine + H2O = S-(5-deoxy-D-ribos-5-yl)-L-homocysteine + adenine. It catalyses the reaction S-methyl-5'-thioadenosine + H2O = 5-(methylsulfanyl)-D-ribose + adenine. The enzyme catalyses 5'-deoxyadenosine + H2O = 5-deoxy-D-ribose + adenine. The protein operates within amino-acid biosynthesis; L-methionine biosynthesis via salvage pathway; S-methyl-5-thio-alpha-D-ribose 1-phosphate from S-methyl-5'-thioadenosine (hydrolase route): step 1/2. In terms of biological role, catalyzes the irreversible cleavage of the glycosidic bond in both 5'-methylthioadenosine (MTA) and S-adenosylhomocysteine (SAH/AdoHcy) to adenine and the corresponding thioribose, 5'-methylthioribose and S-ribosylhomocysteine, respectively. Also cleaves 5'-deoxyadenosine, a toxic by-product of radical S-adenosylmethionine (SAM) enzymes, into 5-deoxyribose and adenine. The polypeptide is 5'-methylthioadenosine/S-adenosylhomocysteine nucleosidase (Haemophilus influenzae (strain PittGG)).